The sequence spans 723 residues: MSQTITQGRLRIDANFKRFVDEEVLPGVELDAAAFWHNVDEIVHDLAPENRQLLAERDRIQAALDEWHRSNPGPVKDKAAYKSFLRELGYLVPQPDHVTVETTGIDSEITSQAGPQLVVPAMNARYALNAANARWGSLYDALYGSDIIPQEGAMVSGYDPQRGEQVIAWVRRFLDESLPLENGSYQDVVAFKVVDKQLRIQLKNGKETTLRTPAQFVGYRGDTAAPTCILLKNNGLHIELQIDANGRIGKDDSAHINDVIVEAAISTILDCEDSVAAVDAEDKILLYRNLLGLMQGTLQEKMEKNGRQIVRKLNDDRQYTAADGSEISLHGRSLLFIRNVGHLMTIPVIWDSEGNEIPEGILDGVMTGAIALYDLKVQKNSRTGSVYIVKPKMHGPQEVAFANKLFSRVETMLGMAPNTLKMGIMDEERRTSLNLRSCIAQARNRVAFINTGFLDRTGDEMHSVMEAGPMLRKNQMKSTPWIKAYERNNVLSGLFCGLRGKAQIGKGMWAMPDLMADMYSQKGDQLRAGANTAWVPSPTAATLHALHYHQTNVQSVQANIAQTEFNAEFEPLLDDLLTIPVAENANWSVEEIQQELDNNVQGILGYVVRWVEQGIGCSKVPDIHNVALMEDRATLRISSQHIANWLRHGILTKEQVQASLENMAKVVDQQNAGDPAYRPMAGNFANSCAFKAASDLIFLGVKQPNGYTEPLLHAWRLREKESH.

Residues Val118, 125 to 126, Ser274, and Arg311 contribute to the acetyl-CoA site; that span reads RY. Arg338 acts as the Proton acceptor in catalysis. Residues Arg338, Glu427, and 452 to 455 each bind glyoxylate; that span reads GFLD. Mg(2+) is bound by residues Glu427 and Asp455. Acetyl-CoA is bound at residue Pro536. Residue Cys617 is modified to Cysteine sulfenic acid (-SOH). Asp631 (proton donor) is an active-site residue. Cys688 is modified (cysteine sulfenic acid (-SOH)).

It belongs to the malate synthase family. GlcB subfamily. Monomer. It depends on Mg(2+) as a cofactor.

It is found in the cytoplasm. It carries out the reaction glyoxylate + acetyl-CoA + H2O = (S)-malate + CoA + H(+). Its pathway is carbohydrate metabolism; glyoxylate cycle; (S)-malate from isocitrate: step 2/2. Functionally, involved in the glycolate utilization. Catalyzes the condensation and subsequent hydrolysis of acetyl-coenzyme A (acetyl-CoA) and glyoxylate to form malate and CoA. The chain is Malate synthase G from Escherichia coli O6:H1 (strain CFT073 / ATCC 700928 / UPEC).